The primary structure comprises 176 residues: Protein GrpE (176 aa).

The segment at 1-28 (MSEQKQEFENENAENSEHLQDENLQNIE) is disordered.

It belongs to the GrpE family. Homodimer.

It localises to the cytoplasm. Participates actively in the response to hyperosmotic and heat shock by preventing the aggregation of stress-denatured proteins, in association with DnaK and GrpE. It is the nucleotide exchange factor for DnaK and may function as a thermosensor. Unfolded proteins bind initially to DnaJ; upon interaction with the DnaJ-bound protein, DnaK hydrolyzes its bound ATP, resulting in the formation of a stable complex. GrpE releases ADP from DnaK; ATP binding to DnaK triggers the release of the substrate protein, thus completing the reaction cycle. Several rounds of ATP-dependent interactions between DnaJ, DnaK and GrpE are required for fully efficient folding. The chain is Protein GrpE from Campylobacter jejuni subsp. jejuni serotype O:2 (strain ATCC 700819 / NCTC 11168).